The following is a 435-amino-acid chain: Glutamyl-tRNA reductase (435 aa).

Substrate is bound by residues 49–52 (TCNR), S109, 114–116 (ETQ), and Q120. The Nucleophile role is filled by C50. 189–194 (GAGEMS) is a binding site for NADP(+).

This sequence belongs to the glutamyl-tRNA reductase family. As to quaternary structure, homodimer.

The catalysed reaction is (S)-4-amino-5-oxopentanoate + tRNA(Glu) + NADP(+) = L-glutamyl-tRNA(Glu) + NADPH + H(+). Its pathway is porphyrin-containing compound metabolism; protoporphyrin-IX biosynthesis; 5-aminolevulinate from L-glutamyl-tRNA(Glu): step 1/2. Its function is as follows. Catalyzes the NADPH-dependent reduction of glutamyl-tRNA(Glu) to glutamate 1-semialdehyde (GSA). This chain is Glutamyl-tRNA reductase, found in Listeria monocytogenes serotype 4b (strain F2365).